A 182-amino-acid polypeptide reads, in one-letter code: Fatty-acid and retinol-binding protein 1 (182 aa).

A signal peptide spans 1–17 (MIRATIILAAVAALAFS). Residues 86–106 (EKASKLHQIVKDKVNALNDEA) adopt a coiled-coil conformation.

The protein belongs to the fatty-acid and retinol-binding protein (FARBP) family.

The protein resides in the secreted. Functionally, probably binds lipids. This is Fatty-acid and retinol-binding protein 1 (far-1) from Caenorhabditis elegans.